Reading from the N-terminus, the 257-residue chain is Gamma-secretase subunit APH-1B (257 aa).

A run of 7 helical transmembrane segments spans residues 5–25, 32–52, 66–86, 115–135, 160–180, 186–206, and 213–233; these read VFFGCAFIAFGPALALYVFTI, VIFLIAGAFFWLVSLLLSSVF, PVQNYLLIFGVLLSVCIQELF, LLAYVSGLGFGIMSGVFSFVN, AFMTLVVIMLHVFWGVVFFDG, WYTLLTVLLTHLVVSTQTFLS, and LVTAYIIMVLMGIWAFYVAGG.

This sequence belongs to the APH-1 family. In terms of assembly, probable component of the gamma-secretase complex, a complex composed of a presenilin homodimer (PSEN1 or PSEN2), nicastrin (NCSTN), APH1 (APH1A or APH1B) and PEN2. Such minimal complex is sufficient for secretase activity, although other components may exist. Interacts with PSEN1 and PSEN2.

Its subcellular location is the membrane. Probable subunit of the gamma-secretase complex, an endoprotease complex that catalyzes the intramembrane cleavage of integral proteins such as Notch receptors and APP (amyloid-beta precursor protein). It probably represents a stabilizing cofactor for the presenilin homodimer that promotes the formation of a stable complex. Probably present in a minority of gamma-secretase complexes compared to APH1A. In Mus musculus (Mouse), this protein is Gamma-secretase subunit APH-1B (Aph1b).